The sequence spans 132 residues: Myelin P2 protein (132 aa).

Ser-2 carries the N-acetylserine modification. Arg-107 is a binding site for (9Z)-octadecenoate. Arg-107 serves as a coordination point for hexadecanoate. Cys-118 and Cys-125 are joined by a disulfide. Residue Arg-127–Tyr-129 coordinates (9Z)-octadecenoate. Arg-127 to Tyr-129 lines the hexadecanoate pocket.

The protein belongs to the calycin superfamily. Fatty-acid binding protein (FABP) family. As to quaternary structure, monomer. Detected in spinal cord (at protein level).

The protein resides in the cytoplasm. In terms of biological role, may play a role in lipid transport protein in Schwann cells. May bind cholesterol. This is Myelin P2 protein (PMP2) from Equus caballus (Horse).